Reading from the N-terminus, the 207-residue chain is Ribosomal RNA small subunit methyltransferase G (207 aa).

Residues G74, L79, 125–126, and R140 contribute to the S-adenosyl-L-methionine site; that span reads VE.

It belongs to the methyltransferase superfamily. RNA methyltransferase RsmG family.

It is found in the cytoplasm. It catalyses the reaction guanosine(527) in 16S rRNA + S-adenosyl-L-methionine = N(7)-methylguanosine(527) in 16S rRNA + S-adenosyl-L-homocysteine. Its function is as follows. Specifically methylates the N7 position of guanine in position 527 of 16S rRNA. This is Ribosomal RNA small subunit methyltransferase G from Shewanella pealeana (strain ATCC 700345 / ANG-SQ1).